The primary structure comprises 642 residues: Threonine--tRNA ligase (642 aa).

The TGS domain maps to 1–61 (MPIITLPDGS…EADASLAIIT (61 aa)). The catalytic stretch occupies residues 243-534 (DHRKIGKQLD…LTEEYAGLFP (292 aa)). Zn(2+) is bound by residues Cys334, His385, and His511.

Belongs to the class-II aminoacyl-tRNA synthetase family. Homodimer. Zn(2+) serves as cofactor.

The protein resides in the cytoplasm. The enzyme catalyses tRNA(Thr) + L-threonine + ATP = L-threonyl-tRNA(Thr) + AMP + diphosphate + H(+). Catalyzes the attachment of threonine to tRNA(Thr) in a two-step reaction: L-threonine is first activated by ATP to form Thr-AMP and then transferred to the acceptor end of tRNA(Thr). Also edits incorrectly charged L-seryl-tRNA(Thr). This chain is Threonine--tRNA ligase, found in Aeromonas hydrophila subsp. hydrophila (strain ATCC 7966 / DSM 30187 / BCRC 13018 / CCUG 14551 / JCM 1027 / KCTC 2358 / NCIMB 9240 / NCTC 8049).